A 589-amino-acid chain; its full sequence is Isocitrate dehydrogenase kinase/phosphatase (589 aa).

ATP is bound by residues 322–328 (APGIRGL) and K343. D378 is a catalytic residue.

Belongs to the AceK family.

Its subcellular location is the cytoplasm. It catalyses the reaction L-seryl-[isocitrate dehydrogenase] + ATP = O-phospho-L-seryl-[isocitrate dehydrogenase] + ADP + H(+). In terms of biological role, bifunctional enzyme which can phosphorylate or dephosphorylate isocitrate dehydrogenase (IDH) on a specific serine residue. This is a regulatory mechanism which enables bacteria to bypass the Krebs cycle via the glyoxylate shunt in response to the source of carbon. When bacteria are grown on glucose, IDH is fully active and unphosphorylated, but when grown on acetate or ethanol, the activity of IDH declines drastically concomitant with its phosphorylation. The protein is Isocitrate dehydrogenase kinase/phosphatase of Azoarcus sp. (strain BH72).